A 359-amino-acid polypeptide reads, in one-letter code: tRNA pseudouridine synthase B (359 aa).

Residue D63 is the Nucleophile of the active site.

The protein belongs to the pseudouridine synthase TruB family. Type 1 subfamily.

The enzyme catalyses uridine(55) in tRNA = pseudouridine(55) in tRNA. Functionally, responsible for synthesis of pseudouridine from uracil-55 in the psi GC loop of transfer RNAs. The chain is tRNA pseudouridine synthase B from Psychrobacter cryohalolentis (strain ATCC BAA-1226 / DSM 17306 / VKM B-2378 / K5).